The chain runs to 335 residues: Serine protease 42 (335 aa).

The signal sequence occupies residues 1-24 (MASGGGSLGLIVFLLLLQPKPCEA). An N-linked (GlcNAc...) asparagine glycan is attached at Asn67. The 237-residue stretch at 79–315 (IMGGVDAEEG…YSKWLIAVVN (237 aa)) folds into the Peptidase S1 domain. Cysteines 104 and 120 form a disulfide. His119 functions as the Charge relay system in the catalytic mechanism. The N-linked (GlcNAc...) asparagine glycan is linked to Asn140. Asp165 (charge relay system) is an active-site residue. Residue Asn176 is glycosylated (N-linked (GlcNAc...) asparagine). Disulfide bonds link Cys199–Cys273, Cys232–Cys253, and Cys263–Cys291. Catalysis depends on Ser267, which acts as the Charge relay system.

Belongs to the peptidase S1 family. Testis-specific. Mainly detected in round spermatids at all the eminiferous epithelial stages (at protein level).

It is found in the cytoplasm. Its subcellular location is the cell membrane. Plays a role in spermatogenesis. Involved in germ cell survival during meiosis. Lacks protease activity in vitro. The polypeptide is Serine protease 42 (Mus musculus (Mouse)).